We begin with the raw amino-acid sequence, 328 residues long: uncharacterized protein (328 aa).

Residues Leu-37 to Ile-179 enclose the SIS domain. ATP is bound at residue Gly-52–Gly-57. CBS domains follow at residues Pro-207–Ile-264 and Met-273–Leu-328.

This sequence belongs to the SIS family. GutQ/KpsF subfamily.

This is an uncharacterized protein from Chlamydia trachomatis serovar D (strain ATCC VR-885 / DSM 19411 / UW-3/Cx).